Here is a 379-residue protein sequence, read N- to C-terminus: Glutamate 5-kinase (379 aa).

Lys19 lines the ATP pocket. Ser59, Asp146, and Asn158 together coordinate substrate. ATP is bound by residues 178–179 (TD) and 220–226 (TGGMATK). The 79-residue stretch at 285–363 (SGDIIIDDGA…KDIISILGHD (79 aa)) folds into the PUA domain.

The protein belongs to the glutamate 5-kinase family.

The protein localises to the cytoplasm. The enzyme catalyses L-glutamate + ATP = L-glutamyl 5-phosphate + ADP. Its pathway is amino-acid biosynthesis; L-proline biosynthesis; L-glutamate 5-semialdehyde from L-glutamate: step 1/2. Its function is as follows. Catalyzes the transfer of a phosphate group to glutamate to form L-glutamate 5-phosphate. This Vibrio campbellii (strain ATCC BAA-1116) protein is Glutamate 5-kinase.